A 67-amino-acid polypeptide reads, in one-letter code: MSVLPVVVVFGMSFPPIFIEIIVSLMLFWLIRRAITPTGLYDLVWHPALFNTALYCCLFYVVSRLFV.

The next 2 membrane-spanning stretches (helical) occupy residues 3-23 and 43-63; these read VLPV…EIIV and LVWH…YVVS.

Belongs to the AaeX family.

It is found in the cell membrane. In Erwinia tasmaniensis (strain DSM 17950 / CFBP 7177 / CIP 109463 / NCPPB 4357 / Et1/99), this protein is Protein AaeX.